The following is a 471-amino-acid chain: Glutamate--tRNA ligase (471 aa).

Positions 9–19 (PSPTGYLHVGG) match the 'HIGH' region motif. Positions 98, 100, 125, and 127 each coordinate Zn(2+). The 'KMSKS' region signature appears at 237–241 (KLSKR). K240 serves as a coordination point for ATP.

This sequence belongs to the class-I aminoacyl-tRNA synthetase family. Glutamate--tRNA ligase type 1 subfamily. Monomer. The cofactor is Zn(2+).

It localises to the cytoplasm. It catalyses the reaction tRNA(Glu) + L-glutamate + ATP = L-glutamyl-tRNA(Glu) + AMP + diphosphate. Functionally, catalyzes the attachment of glutamate to tRNA(Glu) in a two-step reaction: glutamate is first activated by ATP to form Glu-AMP and then transferred to the acceptor end of tRNA(Glu). This Citrobacter koseri (strain ATCC BAA-895 / CDC 4225-83 / SGSC4696) protein is Glutamate--tRNA ligase.